Here is a 275-residue protein sequence, read N- to C-terminus: tRNA pseudouridine synthase A (275 aa).

The Nucleophile role is filled by Asp-56. Residue Tyr-114 coordinates substrate.

Belongs to the tRNA pseudouridine synthase TruA family. In terms of assembly, homodimer.

The enzyme catalyses uridine(38/39/40) in tRNA = pseudouridine(38/39/40) in tRNA. Formation of pseudouridine at positions 38, 39 and 40 in the anticodon stem and loop of transfer RNAs. The protein is tRNA pseudouridine synthase A of Polynucleobacter asymbioticus (strain DSM 18221 / CIP 109841 / QLW-P1DMWA-1) (Polynucleobacter necessarius subsp. asymbioticus).